A 122-amino-acid polypeptide reads, in one-letter code: MIGMRTILEVADNSGARRLSCILPRGGDLGLRAGLGDVVTAAVKEAAPDSAIKKGKVVRCVIVRMRKETRRKDGTYIRFDSNAAVLINDVGEPVGTRVFGPVARELRDKKFMKIVSLAPEVI.

Belongs to the universal ribosomal protein uL14 family. In terms of assembly, part of the 50S ribosomal subunit. Forms a cluster with proteins L3 and L19. In the 70S ribosome, L14 and L19 interact and together make contacts with the 16S rRNA in bridges B5 and B8.

Binds to 23S rRNA. Forms part of two intersubunit bridges in the 70S ribosome. This is Large ribosomal subunit protein uL14 from Solibacter usitatus (strain Ellin6076).